Reading from the N-terminus, the 144-residue chain is Small ribosomal subunit protein bS6 (144 aa).

A disordered region spans residues 95–144 (ELEEGPSAMMQSKSRDDRPRRGEGDDRPRRDDREDRPRRDREPRRMEGGE). Residues 107-144 (KSRDDRPRRGEGDDRPRRDDREDRPRRDREPRRMEGGE) are compositionally biased toward basic and acidic residues.

Belongs to the bacterial ribosomal protein bS6 family.

In terms of biological role, binds together with bS18 to 16S ribosomal RNA. The polypeptide is Small ribosomal subunit protein bS6 (Paramagnetospirillum magneticum (strain ATCC 700264 / AMB-1) (Magnetospirillum magneticum)).